A 481-amino-acid chain; its full sequence is Sialic acid-binding Ig-like lectin 16 (481 aa).

The first 16 residues, 1–16 (MLLLPLLLPVLGAGSL), serve as a signal peptide directing secretion. Topologically, residues 17–434 (NKDPSYSLQV…VHCKSGPMTG (418 aa)) are extracellular. In terms of domain architecture, Ig-like V-type spans 19-122 (DPSYSLQVQR…DEAWYFFRVE (104 aa)). Intrachain disulfides connect cysteine 37–cysteine 174, cysteine 42–cysteine 102, cysteine 165–cysteine 216, and cysteine 259–cysteine 306. 2 N-linked (GlcNAc...) asparagine glycosylation sites follow: asparagine 43 and asparagine 78. Arginine 120 provides a ligand contact to N-acetylneuraminate. 3 Ig-like C2-type domains span residues 147-232 (PDVY…RTVR), 238-322 (LELQ…LDLS), and 327-424 (PENL…LSFS). Asparagine 338 and asparagine 347 each carry an N-linked (GlcNAc...) asparagine glycan. Cysteine 363 and cysteine 408 form a disulfide bridge. A helical transmembrane segment spans residues 435-455 (VVLVAVGEVAMKILLLCLCLI). At 456-481 (LLRVRSCRRKAARAALGMEAADAVTD) the chain is on the cytoplasmic side.

It belongs to the immunoglobulin superfamily. SIGLEC (sialic acid binding Ig-like lectin) family. In terms of tissue distribution, expressed in bone marrow, fetal brain, fetal liver, lung and salivary gland. Detected in brain, macrophage, cancerous esophagus and lung at protein level.

It is found in the membrane. Putative adhesion molecule that mediates sialic-acid dependent binding to cells. The chain is Sialic acid-binding Ig-like lectin 16 (SIGLEC16) from Homo sapiens (Human).